The primary structure comprises 71 residues: Small ribosomal subunit protein bS21 (71 aa).

Residues 39–71 (EKPTTVRKRAKAAAQKRHAKKLARENARRVRLY) are disordered. The segment covering 43-59 (TVRKRAKAAAQKRHAKK) has biased composition (basic residues). Over residues 60-71 (LARENARRVRLY) the composition is skewed to basic and acidic residues.

The protein belongs to the bacterial ribosomal protein bS21 family.

This chain is Small ribosomal subunit protein bS21, found in Vibrio atlanticus (strain LGP32) (Vibrio splendidus (strain Mel32)).